Reading from the N-terminus, the 333-residue chain is Phosphate acyltransferase (333 aa).

Belongs to the PlsX family. Homodimer. Probably interacts with PlsY.

Its subcellular location is the cytoplasm. The enzyme catalyses a fatty acyl-[ACP] + phosphate = an acyl phosphate + holo-[ACP]. The protein operates within lipid metabolism; phospholipid metabolism. Functionally, catalyzes the reversible formation of acyl-phosphate (acyl-PO(4)) from acyl-[acyl-carrier-protein] (acyl-ACP). This enzyme utilizes acyl-ACP as fatty acyl donor, but not acyl-CoA. The chain is Phosphate acyltransferase from Thermosipho melanesiensis (strain DSM 12029 / CIP 104789 / BI429).